We begin with the raw amino-acid sequence, 274 residues long: 2,3,4,5-tetrahydropyridine-2,6-dicarboxylate N-succinyltransferase (274 aa).

Belongs to the transferase hexapeptide repeat family.

The protein localises to the cytoplasm. The catalysed reaction is (S)-2,3,4,5-tetrahydrodipicolinate + succinyl-CoA + H2O = (S)-2-succinylamino-6-oxoheptanedioate + CoA. It functions in the pathway amino-acid biosynthesis; L-lysine biosynthesis via DAP pathway; LL-2,6-diaminopimelate from (S)-tetrahydrodipicolinate (succinylase route): step 1/3. The sequence is that of 2,3,4,5-tetrahydropyridine-2,6-dicarboxylate N-succinyltransferase from Leptothrix cholodnii (strain ATCC 51168 / LMG 8142 / SP-6) (Leptothrix discophora (strain SP-6)).